A 205-amino-acid chain; its full sequence is Protease (205 aa).

Active-site residues include H54, D71, and C122.

The protein belongs to the peptidase C5 family. In terms of assembly, interacts with protease cofactor pVI-C; this interaction is necessary for protease activation.

The protein resides in the virion. Its subcellular location is the host nucleus. It catalyses the reaction Cleaves proteins of the adenovirus and its host cell at two consensus sites: -Yaa-Xaa-Gly-Gly-|-Xaa- and -Yaa-Xaa-Gly-Xaa-|-Gly- (in which Yaa is Met, Ile or Leu, and Xaa is any amino acid).. Its activity is regulated as follows. Requires DNA and protease cofactor for maximal activation. Inside nascent virions, becomes partially activated by binding to the viral DNA, allowing it to cleave the cofactor that binds to the protease and fully activates it. Actin, like the viral protease cofactor, seems to act as a cofactor in the cleavage of cytokeratin 18 and of actin itself. Functionally, cleaves viral precursor proteins (pTP, pIIIa, pVI, pVII, pVIII, and pX) inside newly assembled particles giving rise to mature virions. Protease complexed to its cofactor slides along the viral DNA to specifically locate and cleave the viral precursors. Mature virions have a weakened organization compared to the unmature virions, thereby facilitating subsequent uncoating. Without maturation, the particle lacks infectivity and is unable to uncoat. Late in adenovirus infection, in the cytoplasm, may participate in the cytoskeleton destruction. Cleaves host cell cytoskeletal keratins K7 and K18. In Homo sapiens (Human), this protein is Protease.